We begin with the raw amino-acid sequence, 243 residues long: Transmembrane protein 174 (243 aa).

The next 2 helical transmembrane spans lie at 40-60 (LLFSGIFLGLVGITFTVMGWI) and 73-93 (LLGPILLSVGVTFILISVCKF). Residues 205–229 (AGHDRPSSDADQLEGTQMGEEERVC) are disordered.

Interacts with SLC34A1; regulates SLC34A1 internalization by PTH and FGF23.

Its subcellular location is the endoplasmic reticulum membrane. It localises to the apical cell membrane. Regulator of plasma phosphate homeostasis. Decreases serum inorganic phosphate (Pi) uptake by regulating the sodium-phosphate cotransporter SLC34A1 trafficking by PTH and FGF23 in the kidney. The polypeptide is Transmembrane protein 174 (Tmem174) (Rattus norvegicus (Rat)).